The sequence spans 96 residues: Protein Vpr (96 aa).

The interval 1 to 42 (MEQPPEDQGPQREPYNEWTLELLEELKHEAVRHFPREWLHGL) is homooligomerization. Phosphoserine; by host occurs at positions 79 and 96.

The protein belongs to the HIV-1 VPR protein family. As to quaternary structure, homooligomer, may form homodimer. Interacts with p6-gag region of the Pr55 Gag precursor protein through a (Leu-X-X)4 motif near the C-terminus of the P6gag protein. Interacts with host UNG. May interact with host RAD23A/HHR23A. Interacts with host VPRBP/DCAF1, leading to hijack the CUL4A-RBX1-DDB1-DCAF1/VPRBP complex, mediating ubiquitination of host proteins such as TERT and ZGPAT and arrest of the cell cycle in G2 phase. Post-translationally, phosphorylated on several residues by host. These phosphorylations regulate VPR activity for the nuclear import of the HIV-1 pre-integration complex.

The protein resides in the virion. It localises to the host nucleus. The protein localises to the host extracellular space. In terms of biological role, during virus replication, may deplete host UNG protein, and incude G2-M cell cycle arrest. Acts by targeting specific host proteins for degradation by the 26S proteasome, through association with the cellular CUL4A-DDB1 E3 ligase complex by direct interaction with host VPRPB/DCAF-1. Cell cycle arrest reportedly occurs within hours of infection and is not blocked by antiviral agents, suggesting that it is initiated by the VPR carried into the virion. Additionally, VPR induces apoptosis in a cell cycle dependent manner suggesting that these two effects are mechanistically linked. Detected in the serum and cerebrospinal fluid of AIDS patient, VPR may also induce cell death to bystander cells. Functionally, during virus entry, plays a role in the transport of the viral pre-integration (PIC) complex to the host nucleus. This function is crucial for viral infection of non-dividing macrophages. May act directly at the nuclear pore complex, by binding nucleoporins phenylalanine-glycine (FG)-repeat regions. This chain is Protein Vpr, found in Homo sapiens (Human).